The sequence spans 316 residues: Mitochondrial distribution and morphology protein 12 (316 aa).

Residues Met-1–Gly-312 form the SMP-LTD domain.

It belongs to the MDM12 family. Component of the ER-mitochondria encounter structure (ERMES) or MDM complex, composed of MMM1, MDM10, MDM12 and MDM34. An MMM1 homodimer associates with one molecule of MDM12 on each side in a pairwise head-to-tail manner, and the SMP-LTD domains of MMM1 and MDM12 generate a continuous hydrophobic tunnel for phospholipid trafficking.

The protein resides in the mitochondrion outer membrane. The protein localises to the endoplasmic reticulum membrane. Functionally, component of the ERMES/MDM complex, which serves as a molecular tether to connect the endoplasmic reticulum (ER) and mitochondria. Components of this complex are involved in the control of mitochondrial shape and protein biogenesis, and function in nonvesicular lipid trafficking between the ER and mitochondria. MDM12 is required for the interaction of the ER-resident membrane protein MMM1 and the outer mitochondrial membrane-resident beta-barrel protein MDM10. The MDM12-MMM1 subcomplex functions in the major beta-barrel assembly pathway that is responsible for biogenesis of all mitochondrial outer membrane beta-barrel proteins, and acts in a late step after the SAM complex. The MDM10-MDM12-MMM1 subcomplex further acts in the TOM40-specific pathway after the action of the MDM12-MMM1 complex. Essential for establishing and maintaining the structure of mitochondria and maintenance of mtDNA nucleoids. This is Mitochondrial distribution and morphology protein 12 from Postia placenta (strain ATCC 44394 / Madison 698-R) (Brown rot fungus).